The chain runs to 441 residues: Aminopeptidase C (441 aa).

Catalysis depends on residues Cys-70, His-361, and Asn-382.

Belongs to the peptidase C1 family.

It catalyses the reaction Inactivates bleomycin B2 (a cytotoxic glycometallopeptide) by hydrolysis of a carboxyamide bond of beta-aminoalanine, but also shows general aminopeptidase activity. The specificity varies somewhat with source, but amino acid arylamides of Met, Leu and Ala are preferred.. The chain is Aminopeptidase C (pepC) from Listeria monocytogenes serovar 1/2a (strain ATCC BAA-679 / EGD-e).